We begin with the raw amino-acid sequence, 173 residues long: Alpha-crystallin A chain (173 aa).

Methionine 1 is subject to N-acetylmethionine. Positions 52–164 constitute a sHSP domain; it reads LFRSVLESGI…SDRPIPVARE (113 aa). Zn(2+) is bound by residues histidine 100, glutamate 102, histidine 107, and histidine 154. The tract at residues 152 to 173 is disordered; that stretch reads TIHSDRPIPVAREEKPTSAPSS. Residues 153–167 show a composition bias toward basic and acidic residues; sequence IHSDRPIPVAREEKP.

The protein belongs to the small heat shock protein (HSP20) family. As to quaternary structure, heteropolymer composed of three CRYAA and one CRYAB subunits. Inter-subunit bridging via zinc ions enhances stability, which is crucial as there is no protein turn over in the lens. Can also form homodimers and homotetramers (dimers of dimers) which serve as the building blocks of homooligomers. Within homooligomers, the zinc-binding motif is created from residues of 3 different molecules. His-100 and Glu-102 from one molecule are ligands of the zinc ion, and His-107 and His-154 residues from additional molecules complete the site with tetrahedral coordination geometry.

The protein resides in the cytoplasm. The protein localises to the nucleus. Its function is as follows. Contributes to the transparency and refractive index of the lens. May act as a chaperone, preventing aggregation of various proteins under a wide range of stress conditions. The sequence is that of Alpha-crystallin A chain (CRYAA) from Alligator mississippiensis (American alligator).